A 1426-amino-acid chain; its full sequence is Ferlin 2 (1426 aa).

C2 domains lie at 1–111 (MGKT…QIRK), 161–279 (RKAV…PRWF), 512–638 (EKSK…ESPT), 1031–1154 (SEDR…QKSM), and 1189–1318 (KAGE…TLNS). Positions 1357–1377 (SKPVGLGREPPNRDPRLTTPQ) are disordered. The segment covering 1366-1377 (PPNRDPRLTTPQ) has biased composition (basic and acidic residues). Residues 1404 to 1424 (VAAVVFLSIWIFVVAFLYPSL) form a helical membrane-spanning segment.

It belongs to the ferlin family.

It is found in the membrane. Its subcellular location is the inner membrane complex. The protein resides in the cytoplasmic vesicle. It localises to the secretory vesicle. The protein localises to the rhoptry. In terms of biological role, regulates rhoptry secretion. Required for completing the lytic cycle. Required for host cell invasion. Not required for microneme secretion and conoid extrusion. The chain is Ferlin 2 from Toxoplasma gondii.